A 447-amino-acid polypeptide reads, in one-letter code: Sulfoquinovose isomerase (447 aa).

The protein belongs to the SqvD family.

It catalyses the reaction 6-sulfo-beta-D-quinovose = 6-deoxy-6-sulfo-D-fructose. In terms of biological role, part of the sulfo-TK pathway, a D-sulfoquinovose degradation pathway that produces 2-hydroxyethane-1-sulfonate (isethionate). Catalyzes the isomerization of sulfoquinovose (SQ) to 6-deoxy-6-sulfo-D-fructose (SF). This Clostridium sp. (strain MSTE9) protein is Sulfoquinovose isomerase.